A 75-amino-acid polypeptide reads, in one-letter code: Tautomerase PptA (75 aa).

P2 (proton acceptor; via imino nitrogen) is an active-site residue.

It belongs to the 4-oxalocrotonate tautomerase family. PptA subfamily. As to quaternary structure, homodimer.

It localises to the cytoplasm. The sequence is that of Tautomerase PptA from Klebsiella pneumoniae subsp. pneumoniae (strain ATCC 700721 / MGH 78578).